The following is a 348-amino-acid chain: Protein disulfide isomerase CRELD2 (348 aa).

The first 22 residues, 1-22, serve as a signal peptide directing secretion; sequence MHLPPAAAVGLLLLLLPPPARV. Positions 30–33 match the CXXC motif; it reads CQRC. 4 cysteine pairs are disulfide-bonded: cysteine 30–cysteine 33, cysteine 139–cysteine 153, cysteine 147–cysteine 165, and cysteine 167–cysteine 176. The EGF-like 1 domain maps to 135-177; the sequence is DCQECQGGSQRPCSGNGHCDGDGSRQGDGSCQCHVGYKGPLCI. An FU 1 repeat occupies 192-239; it reads HSFCTACDESCKTCSGPTNKGCVECEVGWTRVEDACVDVDECAAETPP. Asparagine 250 carries N-linked (GlcNAc...) asparagine glycosylation. The FU 2 repeat unit spans residues 252–299; the sequence is SYTCEECDSTCVGCTGKGPANCKECISGYSKQKGECADIDECSLETKV. Residues 262–265 carry the CXXC motif; sequence CVGC. 4 cysteine pairs are disulfide-bonded: cysteine 262–cysteine 265, cysteine 293–cysteine 307, cysteine 300–cysteine 316, and cysteine 318–cysteine 328. The EGF-like 2; calcium-binding domain maps to 289–329; that stretch reads DIDECSLETKVCKKENENCYNTPGSFVCVCPEGFEEDRRCL.

This sequence belongs to the CRELD family. In terms of assembly, interacts with CHRNA4. Component of a complex containing at least CRELD2, MANF, MATN3 and PDIA4.

The protein localises to the endoplasmic reticulum. The catalysed reaction is Catalyzes the rearrangement of -S-S- bonds in proteins.. In terms of biological role, protein disulfide isomerase. Might play a role in the unfolded protein response. May regulate transport of alpha4-beta2 neuronal acetylcholine receptor. This chain is Protein disulfide isomerase CRELD2 (CRELD2), found in Cricetulus griseus (Chinese hamster).